Here is a 131-residue protein sequence, read N- to C-terminus: Small ribosomal subunit protein uS8 (131 aa).

The protein belongs to the universal ribosomal protein uS8 family. In terms of assembly, part of the 30S ribosomal subunit. Contacts proteins S5 and S12.

One of the primary rRNA binding proteins, it binds directly to 16S rRNA central domain where it helps coordinate assembly of the platform of the 30S subunit. The sequence is that of Small ribosomal subunit protein uS8 from Ruminiclostridium cellulolyticum (strain ATCC 35319 / DSM 5812 / JCM 6584 / H10) (Clostridium cellulolyticum).